The chain runs to 477 residues: PTS system glucose-specific EIICB component (477 aa).

At 1-14 the chain is on the cytoplasmic side; it reads MFKNAFANLQKVGK. Residues 1–388 form the PTS EIIC type-1 domain; the sequence is MFKNAFANLQ…LDLKTPGRED (388 aa). A helical transmembrane segment spans residues 15 to 35; the sequence is SLMLPVSVLPIAGILLGVGSA. Residues 36–50 lie on the Periplasmic side of the membrane; sequence NFSWLPAVVSHVMAE. A helical transmembrane segment spans residues 51–71; the sequence is AGGSVFANMPLIFAIGVALGF. Over 72–79 the chain is Cytoplasmic; sequence TNNDGVSA. Residues 80-100 traverse the membrane as a helical segment; sequence LAAVVAYGIMVKTMAVVAPLV. At 101–111 the chain is on the periplasmic side; it reads LHLPAEEIASK. Residues 112 to 132 traverse the membrane as a helical segment; that stretch reads HLADTGVLGGIISGAIAAYMF. The Cytoplasmic portion of the chain corresponds to 133-151; it reads NRFYRIKLPEYLGFFAGKR. A helical transmembrane segment spans residues 152–172; the sequence is FVPIISGLAAIFTGVVLSFIW. Residues 173–190 lie on the Periplasmic side of the membrane; the sequence is PPIGSAIQTFSQWAAYQN. A helical transmembrane segment spans residues 191 to 211; it reads PVVAFGIYGFIERCLVPFGLH. At 212-249 the chain is on the cytoplasmic side; that stretch reads HIWNVPFQMQIGEYTNAAGQVFHGDIPRYMAGDPTAGK. A helical membrane pass occupies residues 250–270; sequence LSGGFLFKMYGLPAAAIAIWH. The Periplasmic segment spans residues 271-279; that stretch reads SAKPENRAK. The chain crosses the membrane as a helical span at residues 280-300; sequence VGGIMISAALTSFLTGITEPI. The Cytoplasmic portion of the chain corresponds to 301 to 309; the sequence is EFSFMFVAP. Residues 310–330 form a helical membrane-spanning segment; it reads ILYIIHAILAGLAFPICILLG. Residues 331–355 are Periplasmic-facing; that stretch reads MRDGTSFSHGLIDFIVLSGNSSKLW. The helical transmembrane segment at 356–376 threads the bilayer; sequence LFPIVGIGYAIVYYTIFRVLI. At 377 to 477 the chain is on the cytoplasmic side; the sequence is KALDLKTPGR…TEMDEYIRNH (101 aa). Residues 399–477 enclose the PTS EIIB type-1 domain; the sequence is SEMAPALVAA…TEMDEYIRNH (79 aa). Cys421 (phosphocysteinsyse intermediate; for EIIB activity) is an active-site residue. The residue at position 421 (Cys421) is a Phosphocysteine.

The protein localises to the cell inner membrane. The enzyme catalyses N(pros)-phospho-L-histidyl-[protein] + D-glucose(out) = D-glucose 6-phosphate(in) + L-histidyl-[protein]. Its function is as follows. The phosphoenolpyruvate-dependent sugar phosphotransferase system (sugar PTS), a major carbohydrate active transport system, catalyzes the phosphorylation of incoming sugar substrates concomitantly with their translocation across the cell membrane. The enzyme II complex composed of PtsG and Crr is involved in glucose transport. Also functions as a chemoreceptor monitoring the environment for changes in sugar concentration. The chain is PTS system glucose-specific EIICB component (ptsG) from Escherichia coli O6:H1 (strain CFT073 / ATCC 700928 / UPEC).